A 153-amino-acid polypeptide reads, in one-letter code: Nitrogen regulatory protein (153 aa).

The PTS EIIA type-2 domain occupies 5 to 148; that stretch reads DLVAPEAILP…QAIYSVLALP (144 aa). Catalysis depends on histidine 66, which acts as the Tele-phosphohistidine intermediate.

The protein resides in the cytoplasm. Functionally, seems to have a role in regulating nitrogen assimilation. This is Nitrogen regulatory protein (ptsN) from Bradyrhizobium diazoefficiens (strain JCM 10833 / BCRC 13528 / IAM 13628 / NBRC 14792 / USDA 110).